The chain runs to 131 residues: Profilin-8 (131 aa).

A disulfide bridge connects residues Cys13 and Cys115. Residues Ala81–Thr97 carry the Involved in PIP2 interaction motif. The residue at position 111 (Thr111) is a Phosphothreonine.

Belongs to the profilin family. As to quaternary structure, occurs in many kinds of cells as a complex with monomeric actin in a 1:1 ratio. Phosphorylated by MAP kinases.

Its subcellular location is the cytoplasm. The protein localises to the cytoskeleton. In terms of biological role, binds to actin and affects the structure of the cytoskeleton. At high concentrations, profilin prevents the polymerization of actin, whereas it enhances it at low concentrations. This Phleum pratense (Common timothy) protein is Profilin-8.